We begin with the raw amino-acid sequence, 551 residues long: MENRSSSGTPRPSAGSPDAAKRPSETSPAAGRIPAGQNGSSGDKKRKVTEEGEASEKSEPPADRPMSKRKRMEERHQKLRKRGRTPPSAYSRRDAEAAPVPNRNRDDPANRSLSPLPHRSPTPEEQPRQRKRPGGGARMGLVDRETLRRRQEERERALVEEAMRTSQGRGVTDVVRQHYNAVPQRGREWRKTESKIKGLRSFNNWIKSTLIQKFSPDEEFLARLNDGRDWADDSGPPPAEEKRLLVVDLGCGKGGDLGKWQLAPQPVELYVGLDPAEVSIVQARERYNSMKSGRGNRGRRNPLFHGEFAPKDCFGEWLGDIGIVQQVGIDPNAGPGGSVMSSRWGGGGFDVVASMFAIHYAFESEEKARQMLRNVAGCLKKGGRFLGVCPNSDIISARVVELNAKRKAREEQEKKEKSDEAPEDGEVEEDTKLEWGNSIYRVQFPGKTPEDGIFRPPFGWKYSYFMEEAVEEVPEYVVPWEAFRALTEDYNLELQYRKPFLGIWGDEKDDRELGPLSERMGVRDRNTGELLMTEEEKEAANFYHAFCFYKV.

Residues 1–10 (MENRSSSGTP) show a composition bias toward polar residues. Residues 1-152 (MENRSSSGTP…DRETLRRRQE (152 aa)) form a disordered region. Composition is skewed to basic and acidic residues over residues 48–76 (VTEEGEASEKSEPPADRPMSKRKRMEERH) and 141–152 (LVDRETLRRRQE). An mRNA cap 0 methyltransferase domain is found at 194–551 (SKIKGLRSFN…FYHAFCFYKV (358 aa)). 203–204 (NN) provides a ligand contact to mRNA. Residues K207, G250, D274, D312, 355–357 (MFA), and Y360 each bind S-adenosyl-L-methionine. A disordered region spans residues 407-430 (KAREEQEKKEKSDEAPEDGEVEED). The segment covering 408–420 (AREEQEKKEKSDE) has biased composition (basic and acidic residues). Residues 421 to 430 (APEDGEVEED) show a composition bias toward acidic residues.

This sequence belongs to the class I-like SAM-binding methyltransferase superfamily. mRNA cap 0 methyltransferase family.

The protein resides in the nucleus. It catalyses the reaction a 5'-end (5'-triphosphoguanosine)-ribonucleoside in mRNA + S-adenosyl-L-methionine = a 5'-end (N(7)-methyl 5'-triphosphoguanosine)-ribonucleoside in mRNA + S-adenosyl-L-homocysteine. In terms of biological role, responsible for methylating the 5'-cap structure of mRNAs. This Aspergillus clavatus (strain ATCC 1007 / CBS 513.65 / DSM 816 / NCTC 3887 / NRRL 1 / QM 1276 / 107) protein is mRNA cap guanine-N(7) methyltransferase (abd1).